A 334-amino-acid polypeptide reads, in one-letter code: Cathepsin K (334 aa).

An N-terminal signal peptide occupies residues 1–19 (MLRLHWLALLVLLLPMAAA). Positions 20-119 (QLRPEPELDA…TLYVPDWSSR (100 aa)) are cleaved as a propeptide — activation peptide. Residue N108 is glycosylated (N-linked (GlcNAc...) asparagine). Disulfide bonds link C141/C182, C175/C215, and C274/C323. The active site involves C144. Catalysis depends on residues H281 and N301.

It belongs to the peptidase C1 family.

The catalysed reaction is Broad proteolytic activity. With small-molecule substrates and inhibitors, the major determinant of specificity is P2, which is preferably Leu, Met &gt; Phe, and not Arg.. In terms of biological role, closely involved in osteoclastic bone resorption and may participate partially in the disorder of bone remodeling. Displays potent endoprotease activity against fibrinogen at acid pH. May play an important role in extracellular matrix degradation. In Gallus gallus (Chicken), this protein is Cathepsin K (CTSK).